Here is a 235-residue protein sequence, read N- to C-terminus: Orotidine 5'-phosphate decarboxylase (235 aa).

Substrate contacts are provided by residues Asp17, Lys39, Asp66 to Thr75, Thr121, Arg182, Gln191, Gly211, and Arg212. Lys68 serves as the catalytic Proton donor.

This sequence belongs to the OMP decarboxylase family. Type 1 subfamily. Homodimer.

The catalysed reaction is orotidine 5'-phosphate + H(+) = UMP + CO2. It participates in pyrimidine metabolism; UMP biosynthesis via de novo pathway; UMP from orotate: step 2/2. Functionally, catalyzes the decarboxylation of orotidine 5'-monophosphate (OMP) to uridine 5'-monophosphate (UMP). The chain is Orotidine 5'-phosphate decarboxylase from Afipia carboxidovorans (strain ATCC 49405 / DSM 1227 / KCTC 32145 / OM5) (Oligotropha carboxidovorans).